Consider the following 1876-residue polypeptide: Vitellogenin-2 (1876 aa).

The signal sequence occupies residues 1–16 (MMWKTLLCCLLAVSAA). Positions 21–838 (WEPGKRYEYH…SRDSFMPKSV (818 aa)) constitute a Vitellogenin domain. N-linked (GlcNAc...) asparagine glycans are attached at residues Asn211 and Asn290. The interval 322–424 (TGEPSQRDSA…SSSSSSEEYL (103 aa)) is disordered. Low complexity-rich tracts occupy residues 330 to 368 (SAYA…SSSR) and 387 to 404 (SQPR…SKRS). A glycan (N-linked (GlcNAc...) asparagine) is linked at Asn409. Residues 411–420 (SSSSSSSSSS) are compositionally biased toward low complexity. Asn595, Asn631, Asn932, Asn1012, and Asn1055 each carry an N-linked (GlcNAc...) asparagine glycan. The segment at 1192-1239 (SYDNRYTQPEEEEETRQHSKIRRPRSASRKHRRSRHEERAPLENLEVS) is disordered. The segment covering 1209-1225 (HSKIRRPRSASRKHRRS) has biased composition (basic residues). N-linked (GlcNAc...) asparagine glycans are attached at residues Asn1318, Asn1398, Asn1417, Asn1424, Asn1469, Asn1532, Asn1636, Asn1719, Asn1760, and Asn1770. Positions 1518-1703 (PTCVVDYSKV…TLVRDLDRSR (186 aa)) constitute a VWFD domain. A disulfide bridge connects residues Cys1520 and Cys1664. Residues 1729–1788 (SGIRPYDIDDDSSSSSSSSSSSSSSSSSSKSNSTSSSSSESNESALPRGENKLHRAQQPS) form a disordered region. Residues 1741-1772 (SSSSSSSSSSSSSSSSSKSNSTSSSSSESNES) are compositionally biased toward low complexity.

It localises to the secreted. In terms of biological role, precursor of the egg-yolk proteins that are sources of nutrients during embryonic development. The chain is Vitellogenin-2 (VG2) from Periplaneta americana (American cockroach).